The following is a 317-amino-acid chain: MPMQGAQGRLRGSLNATPPTTPHSGLAGNQTGPWCLEVSIPDELFLSLGLVSLVENMLVVAAIAKNRNLHSPMYYFICCLAVSDLLVSVSNVLETAVMLLLEAGVLAAWAGVVQQLDNAIDVFICGSMVSSLCFLGAIAVDRYITIFYALRYHSIVTLPRARWAIATIWAASVVCSTLFIAYYDCTAVLLCLVSFFLALVVLMAVLYMHMLARACLHARSIARLHKRWRPVHQGLGLKGAATLSILLGSFFLCWGPFFLHLTLIVLCPQHPTCSCVFKNFKLFLTLIICNSIVDPLIYAFRSQELRKTLKEVLLCSW.

The disordered stretch occupies residues 1 to 28 (MPMQGAQGRLRGSLNATPPTTPHSGLAG). Topologically, residues 1–37 (MPMQGAQGRLRGSLNATPPTTPHSGLAGNQTGPWCLE) are extracellular. N-linked (GlcNAc...) asparagine glycosylation is present at N29. The chain crosses the membrane as a helical span at residues 38-63 (VSIPDELFLSLGLVSLVENMLVVAAI). The Cytoplasmic segment spans residues 64 to 72 (AKNRNLHSP). A helical membrane pass occupies residues 73–93 (MYYFICCLAVSDLLVSVSNVL). The Extracellular segment spans residues 94–118 (ETAVMLLLEAGVLAAWAGVVQQLDN). Residues 119-140 (AIDVFICGSMVSSLCFLGAIAV) form a helical membrane-spanning segment. Residues 141–163 (DRYITIFYALRYHSIVTLPRARW) are Cytoplasmic-facing. Residues 164 to 183 (AIATIWAASVVCSTLFIAYY) form a helical membrane-spanning segment. Residues 184 to 191 (DCTAVLLC) are Extracellular-facing. A helical membrane pass occupies residues 192–211 (LVSFFLALVVLMAVLYMHML). Residues 212-240 (ARACLHARSIARLHKRWRPVHQGLGLKGA) lie on the Cytoplasmic side of the membrane. Residues 241-266 (ATLSILLGSFFLCWGPFFLHLTLIVL) traverse the membrane as a helical segment. Residues 267–279 (CPQHPTCSCVFKN) are Extracellular-facing. Residues 280-300 (FKLFLTLIICNSIVDPLIYAF) traverse the membrane as a helical segment. Residues 301–317 (RSQELRKTLKEVLLCSW) lie on the Cytoplasmic side of the membrane. A lipid anchor (S-palmitoyl cysteine) is attached at C315.

It belongs to the G-protein coupled receptor 1 family. In terms of assembly, interacts with MGRN1, but does not undergo MGRN1-mediated ubiquitination; this interaction competes with GNAS-binding and thus inhibits agonist-induced cAMP production. Interacts with OPN3; the interaction results in a decrease in MC1R-mediated cAMP signaling and ultimately a decrease in melanin production in melanocytes.

Its subcellular location is the cell membrane. Receptor for MSH (alpha, beta and gamma) and ACTH. The activity of this receptor is mediated by G proteins which activate adenylate cyclase. Mediates melanogenesis, the production of eumelanin (black/brown) and phaeomelanin (red/yellow), via regulation of cAMP signaling in melanocytes. The sequence is that of Melanocyte-stimulating hormone receptor (MC1R) from Mammuthus primigenius (Siberian woolly mammoth).